Reading from the N-terminus, the 359-residue chain is Mitochondrial glutathione transporter SLC25A39 (359 aa).

The Mitochondrial intermembrane portion of the chain corresponds to 1-14; the sequence is MDDQDPGGISPLQQ. 3 Solcar repeats span residues 9–151, 159–243, and 253–347; these read ISPL…LKAF, SDLY…VKSQ, and TSVG…GKSF. The helical transmembrane segment at 15–35 threads the bilayer; that stretch reads MVASGAGAVVTSLFMTPLDVV. The Mitochondrial matrix portion of the chain corresponds to 36-121; sequence KVRLQSQRPT…VKIVRHEGTR (86 aa). The [2Fe-2S] cluster site is built by Cys-74, Cys-78, Cys-88, and Cys-94. Residues 122–142 form a helical membrane-spanning segment; it reads TLWSGLPATLVMTVPATAIYF. At 143–164 the chain is on the mitochondrial intermembrane side; sequence TAYDQLKAFLCGQSLTSDLYAP. A helical membrane pass occupies residues 165-185; it reads MVAGALARMGTVTVVSPLELV. At 186–214 the chain is on the mitochondrial matrix side; sequence RTKLQAQHVSYRELAACVQAAVAQGGWRS. Residues 215-235 form a helical membrane-spanning segment; the sequence is LWLGWGPTALRDVPFSALYWF. At 236 to 255 the chain is on the mitochondrial intermembrane side; sequence NYELVKSQLNGPRQKEQTSV. A helical membrane pass occupies residues 256-276; sequence GISFVAGGISGMVAATLTLPF. The Mitochondrial matrix portion of the chain corresponds to 277–317; the sequence is DVVKTQRQMSLGAVEAMRVKPPRVDSTWLLLRRIQAESGTR. The helical transmembrane segment at 318 to 338 threads the bilayer; that stretch reads GLFAGFLPRIIKAAPSCAIMI. Topologically, residues 339–359 are mitochondrial intermembrane; that stretch reads STYEFGKSFFHRLNQEQPLGH.

This sequence belongs to the mitochondrial carrier (TC 2.A.29) family. Cleaved and degraded by AFG3L2; degradation by AFG3L2 is regulated by the ability of SLC25A39 to bind iron-sulfur. In absence of mitochondrial glutathione, SLC25A39 binds iron-sulfur, preventing cleavage and degradation by AFG3L2. The presence of mitochondrial glutathione prevents iron-sulfur-binding to SLC25A39, promoting cleavage and degradation by AFG3L2.

Its subcellular location is the mitochondrion inner membrane. The enzyme catalyses glutathione(in) = glutathione(out). The activity of SLC25A39 is regulated by levels of mitochondrial glutathione via its ability to bind [2Fe-2S] iron-sulfur cluster. Upon physiological levels of mitochondrial glutathione, glutathione prevents iron-sulfur-binding to SLC25A39 promoting cleavage and degradation by AFG3L2. Upon depletion of mitochondrial glutathione, SLC25A39 binds iron-sulfur, preventing cleavage and degradation by AFG3L2. Functionally, mitochondrial transporter required for glutathione import into mitochondria. Glutathione, which plays key roles in oxidative metabolism, is produced exclusively in the cytosol and is imported in many organelles. Mitochondrial glutathione is required for the activity and stability of proteins containing iron-sulfur clusters, as well as erythropoiesis. This chain is Mitochondrial glutathione transporter SLC25A39 (Slc25a39), found in Rattus norvegicus (Rat).